The sequence spans 1077 residues: Disheveled-associated activator of morphogenesis 1 (1077 aa).

Ser-34 carries the post-translational modification Phosphoserine. The GBD/FH3 domain occupies 45 to 420 (LPMPPVEELD…QIVIQNDKGQ (376 aa)). A coiled-coil region spans residues 437 to 526 (RMLVNENEVK…ELNRRAVCAA (90 aa)). Disordered stretches follow at residues 457 to 478 (KEHNELQQKLEKKERECDAKTQ) and 526 to 596 (AVPG…PVSL). Positions 528–599 (PGGPSPGAPG…PGAPVSLTLK (72 aa)) constitute an FH1 domain. Composition is skewed to pro residues over residues 530–539 (GPSPGAPGGP) and 549–592 (LPPP…PPGA). Residues 600–1008 (KKNIPQPTNA…EERRARLEAQ (409 aa)) form the FH2 domain. Residues 693–702 (QNCNILLSRL) form an actin-binding region. Residues 1007–1026 (AQLKEQRERERKVRKAKESS) are compositionally biased toward basic and acidic residues. 2 disordered regions span residues 1007-1033 (AQLKEQRERERKVRKAKESSEESGEFD) and 1056-1077 (RKRISNQVTDSSRERPITKLNF). Residues Ser-1026 and Ser-1029 each carry the phosphoserine modification. Residues 1026 to 1057 (SEESGEFDDLVSALRSGEVFDKDLSKLKRNRK) enclose the DAD domain. A compositionally biased stretch (basic and acidic residues) spans 1066 to 1077 (SSRERPITKLNF).

The protein belongs to the formin homology family. As to quaternary structure, interacts with CIP4, FNBP1 and FNBP1L. Interacts with the SH3 domains of Abl, BTK, endophilin, spectrin and SRC. Binds specifically to GTP-bound CDC42 and RHOA. Interacts with INTU; INTU mediates the indirect interaction between DAAM1 and NPHP4. Interacts (via coiled coil domain) with KANK1 (via coiled coil domain). In early embryogenesis, expressed in embryonic and extraembryonic ectoderm. In later stages of gastrulation, expressed also in somites and ribs and posterior vertebrae of developing skeletal system. During organogenesis, expressed in CNS, PNS, stomach, liver and limb bud.

It is found in the cytoplasm. The protein resides in the cytoskeleton. Its subcellular location is the cilium basal body. Its function is as follows. Binds to disheveled (Dvl) and Rho, and mediates Wnt-induced Dvl-Rho complex formation. May play a role as a scaffolding protein to recruit Rho-GDP and Rho-GEF, thereby enhancing Rho-GTP formation. Can direct nucleation and elongation of new actin filaments. Involved in building functional cilia. Involved in the organization of the subapical actin network in multiciliated epithelial cells. Together with DAAM2, required for myocardial maturation and sarcomere assembly. During cell division, may regulate RHOA activation that signals spindle orientation and chromosomal segregation. In Mus musculus (Mouse), this protein is Disheveled-associated activator of morphogenesis 1 (Daam1).